Reading from the N-terminus, the 334-residue chain is Ribonucleoside-diphosphate reductase small chain (334 aa).

Asp77, Glu108, and His111 together coordinate Fe cation. The active site involves Tyr115. Fe cation-binding residues include Glu171, Glu205, and His208.

Belongs to the ribonucleoside diphosphate reductase small chain family. As to quaternary structure, heterotetramer composed of a homodimer of the large subunit (R1) and a homodimer of the small subunit (R2). Larger multisubunit protein complex are also active, composed of (R1)n(R2)n. It depends on Fe cation as a cofactor.

The catalysed reaction is a 2'-deoxyribonucleoside 5'-diphosphate + [thioredoxin]-disulfide + H2O = a ribonucleoside 5'-diphosphate + [thioredoxin]-dithiol. In terms of biological role, ribonucleoside-diphosphate reductase holoenzyme provides the precursors necessary for viral DNA synthesis. Allows virus growth in non-dividing cells. Catalyzes the biosynthesis of deoxyribonucleotides from the corresponding ribonucleotides. This is Ribonucleoside-diphosphate reductase small chain from Ornithodoros (relapsing fever ticks).